A 443-amino-acid polypeptide reads, in one-letter code: Tol-Pal system protein TolB (443 aa).

A signal peptide spans 1-33; it reads MKIGIINTKIRTVFSAFACMIAASLVCTMPARA.

It belongs to the TolB family. The Tol-Pal system is composed of five core proteins: the inner membrane proteins TolA, TolQ and TolR, the periplasmic protein TolB and the outer membrane protein Pal. They form a network linking the inner and outer membranes and the peptidoglycan layer.

It localises to the periplasm. Its function is as follows. Part of the Tol-Pal system, which plays a role in outer membrane invagination during cell division and is important for maintaining outer membrane integrity. This is Tol-Pal system protein TolB from Brucella abortus (strain S19).